The sequence spans 247 residues: Phosphatidylserine decarboxylase proenzyme (247 aa).

S206 serves as the catalytic Schiff-base intermediate with substrate; via pyruvic acid. Residue S206 is modified to Pyruvic acid (Ser); by autocatalysis.

The protein belongs to the phosphatidylserine decarboxylase family. PSD-A subfamily. In terms of assembly, heterodimer of a large membrane-associated beta subunit and a small pyruvoyl-containing alpha subunit. Requires pyruvate as cofactor. Is synthesized initially as an inactive proenzyme. Formation of the active enzyme involves a self-maturation process in which the active site pyruvoyl group is generated from an internal serine residue via an autocatalytic post-translational modification. Two non-identical subunits are generated from the proenzyme in this reaction, and the pyruvate is formed at the N-terminus of the alpha chain, which is derived from the carboxyl end of the proenzyme. The post-translation cleavage follows an unusual pathway, termed non-hydrolytic serinolysis, in which the side chain hydroxyl group of the serine supplies its oxygen atom to form the C-terminus of the beta chain, while the remainder of the serine residue undergoes an oxidative deamination to produce ammonia and the pyruvoyl prosthetic group on the alpha chain.

The protein resides in the cell membrane. It catalyses the reaction a 1,2-diacyl-sn-glycero-3-phospho-L-serine + H(+) = a 1,2-diacyl-sn-glycero-3-phosphoethanolamine + CO2. The protein operates within phospholipid metabolism; phosphatidylethanolamine biosynthesis; phosphatidylethanolamine from CDP-diacylglycerol: step 2/2. In terms of biological role, catalyzes the formation of phosphatidylethanolamine (PtdEtn) from phosphatidylserine (PtdSer). In Nitrobacter winogradskyi (strain ATCC 25391 / DSM 10237 / CIP 104748 / NCIMB 11846 / Nb-255), this protein is Phosphatidylserine decarboxylase proenzyme.